A 758-amino-acid chain; its full sequence is 5-methyltetrahydropteroyltriglutamate--homocysteine methyltransferase (758 aa).

5-methyltetrahydropteroyltri-L-glutamate contacts are provided by residues 17 to 20 (RELK) and lysine 117. L-homocysteine is bound by residues 434–436 (IGS) and glutamate 487. L-methionine-binding positions include 434-436 (IGS) and glutamate 487. 5-methyltetrahydropteroyltri-L-glutamate is bound by residues 518 to 519 (RC) and tryptophan 564. Aspartate 602 contacts L-homocysteine. Residue aspartate 602 participates in L-methionine binding. Glutamate 608 contributes to the 5-methyltetrahydropteroyltri-L-glutamate binding site. Zn(2+)-binding residues include histidine 644, cysteine 646, and glutamate 668. Histidine 697 functions as the Proton donor in the catalytic mechanism. Cysteine 729 contributes to the Zn(2+) binding site.

It belongs to the vitamin-B12 independent methionine synthase family. The cofactor is Zn(2+).

The enzyme catalyses 5-methyltetrahydropteroyltri-L-glutamate + L-homocysteine = tetrahydropteroyltri-L-glutamate + L-methionine. Its pathway is amino-acid biosynthesis; L-methionine biosynthesis via de novo pathway; L-methionine from L-homocysteine (MetE route): step 1/1. Functionally, catalyzes the transfer of a methyl group from 5-methyltetrahydrofolate to homocysteine resulting in methionine formation. This is 5-methyltetrahydropteroyltriglutamate--homocysteine methyltransferase from Yersinia pseudotuberculosis serotype I (strain IP32953).